The following is a 332-amino-acid chain: Delta-aminolevulinic acid dehydratase (332 aa).

Residue Lys-202 is the Schiff-base intermediate with substrate of the active site. Residues Arg-212 and Lys-225 each contribute to the 5-aminolevulinate site. Lys-256 serves as the catalytic Schiff-base intermediate with substrate. 2 residues coordinate 5-aminolevulinate: Ser-282 and Tyr-321.

It belongs to the ALAD family. In terms of assembly, homohexamer.

The catalysed reaction is 2 5-aminolevulinate = porphobilinogen + 2 H2O + H(+). It participates in porphyrin-containing compound metabolism; protoporphyrin-IX biosynthesis; coproporphyrinogen-III from 5-aminolevulinate: step 1/4. In terms of biological role, catalyzes an early step in the biosynthesis of tetrapyrroles. Binds two molecules of 5-aminolevulinate per subunit, each at a distinct site, and catalyzes their condensation to form porphobilinogen. This is Delta-aminolevulinic acid dehydratase (hemB) from Rhodobacter capsulatus (Rhodopseudomonas capsulata).